We begin with the raw amino-acid sequence, 417 residues long: Pigment epithelium-derived factor (417 aa).

An N-terminal signal peptide occupies residues 1–19; sequence MQALVLLLWTGALLGHGSS. The segment at 17-41 is disordered; that stretch reads GSSQNVPSSSEGSPVPDSTGEPVEE. The span at 18-28 shows a compositional bias: polar residues; sequence SSQNVPSSSEG. Pyrrolidone carboxylic acid is present on Q20. S24 carries the phosphoserine modification. N-linked (GlcNAc...) asparagine glycosylation is present at N284.

This sequence belongs to the serpin family. In terms of assembly, interacts with PNPLA2; this interaction stimulates the phospholipase A2 activity of PNPLA2. As to expression, highly expressed in the liver, gastric glandular mucosa and renal tubules. It is also expressed in the brain, heart, lung retina and testes.

It localises to the secreted. It is found in the melanosome. Its function is as follows. Neurotrophic protein; induces extensive neuronal differentiation in retinoblastoma cells. Potent inhibitor of angiogenesis. As it does not undergo the S (stressed) to R (relaxed) conformational transition characteristic of active serpins, it exhibits no serine protease inhibitory activity. The sequence is that of Pigment epithelium-derived factor (Serpinf1) from Mus musculus (Mouse).